A 317-amino-acid polypeptide reads, in one-letter code: Ribosome production factor 2 homolog (317 aa).

A Brix domain is found at 28 to 240; sequence KTAIFLRGNA…IRRVQPAESD (213 aa). The interval 287–317 is disordered; sequence MKGLKRSVEEREDSENEEVEIEEDVISDASE. A phosphoserine mark is found at Ser293, Ser300, Ser313, and Ser316. Over residues 296-317 the composition is skewed to acidic residues; that stretch reads EREDSENEEVEIEEDVISDASE.

It belongs to the RPF2 family. As to quaternary structure, component of a hexameric 5S RNP precursor complex, composed of 5S RNA, rrs1, rpf2, rpl5a/rpl5b, rpl11a/rpl11b and syo1; this complex acts as a precursor for ribosome assembly.

The protein resides in the nucleus. It localises to the nucleolus. The protein is Ribosome production factor 2 homolog of Schizosaccharomyces pombe (strain 972 / ATCC 24843) (Fission yeast).